The primary structure comprises 382 residues: Pyrimidine monooxygenase RutA (382 aa).

Residues 68–69, Asn134, Glu143, 159–160, and Ser209 each bind FMN; these read IK and RY.

It belongs to the NtaA/SnaA/DszA monooxygenase family. RutA subfamily.

The catalysed reaction is uracil + FMNH2 + NADH + O2 = (Z)-3-ureidoacrylate + FMN + NAD(+) + H2O + H(+). It catalyses the reaction thymine + FMNH2 + NADH + O2 = (Z)-2-methylureidoacrylate + FMN + NAD(+) + H2O + H(+). Functionally, catalyzes the pyrimidine ring opening between N-3 and C-4 by an unusual flavin hydroperoxide-catalyzed mechanism, adding oxygen atoms in the process to yield ureidoacrylate peracid, that immediately reacts with FMN forming ureidoacrylate and FMN-N(5)-oxide. The FMN-N(5)-oxide reacts spontaneously with NADH to produce FMN. Requires the flavin reductase RutF to regenerate FMN in vivo. This chain is Pyrimidine monooxygenase RutA (rutA), found in Escherichia coli O157:H7.